The primary structure comprises 696 residues: DNA-directed RNA polymerase subunit beta N-terminal section (696 aa).

The protein belongs to the RNA polymerase beta chain family. In terms of assembly, in plastids the minimal PEP RNA polymerase catalytic core is composed of four subunits: alpha, beta, beta', and beta''. When a (nuclear-encoded) sigma factor is associated with the core the holoenzyme is formed, which can initiate transcription.

It localises to the plastid. The protein localises to the chloroplast. The enzyme catalyses RNA(n) + a ribonucleoside 5'-triphosphate = RNA(n+1) + diphosphate. Functionally, DNA-dependent RNA polymerase catalyzes the transcription of DNA into RNA using the four ribonucleoside triphosphates as substrates. This chain is DNA-directed RNA polymerase subunit beta N-terminal section (rpoB1), found in Stigeoclonium helveticum (Green alga).